A 394-amino-acid chain; its full sequence is Anhydro-N-acetylmuramic acid kinase (394 aa).

11 to 18 (GTSADGID) is an ATP binding site.

It belongs to the anhydro-N-acetylmuramic acid kinase family.

It carries out the reaction 1,6-anhydro-N-acetyl-beta-muramate + ATP + H2O = N-acetyl-D-muramate 6-phosphate + ADP + H(+). It participates in amino-sugar metabolism; 1,6-anhydro-N-acetylmuramate degradation. It functions in the pathway cell wall biogenesis; peptidoglycan recycling. Its function is as follows. Catalyzes the specific phosphorylation of 1,6-anhydro-N-acetylmuramic acid (anhMurNAc) with the simultaneous cleavage of the 1,6-anhydro ring, generating MurNAc-6-P. Is required for the utilization of anhMurNAc either imported from the medium or derived from its own cell wall murein, and thus plays a role in cell wall recycling. The chain is Anhydro-N-acetylmuramic acid kinase from Deinococcus geothermalis (strain DSM 11300 / CIP 105573 / AG-3a).